The sequence spans 449 residues: Phosphoglucosamine mutase (449 aa).

Ser-100 serves as the catalytic Phosphoserine intermediate. 4 residues coordinate Mg(2+): Ser-100, Asp-241, Asp-243, and Asp-245. Ser-100 bears the Phosphoserine mark.

It belongs to the phosphohexose mutase family. Mg(2+) is required as a cofactor. Activated by phosphorylation.

It catalyses the reaction alpha-D-glucosamine 1-phosphate = D-glucosamine 6-phosphate. Its function is as follows. Catalyzes the conversion of glucosamine-6-phosphate to glucosamine-1-phosphate. This chain is Phosphoglucosamine mutase, found in Caldicellulosiruptor saccharolyticus (strain ATCC 43494 / DSM 8903 / Tp8T 6331).